A 185-amino-acid polypeptide reads, in one-letter code: Protein FAM219A (185 aa).

M1 is modified (N-acetylmethionine). The disordered stretch occupies residues M1 to S131. S47 is modified (phosphoserine). Basic and acidic residues predominate over residues K52 to R61. Residues K66 to K80 are compositionally biased toward polar residues. Residues S72 and S102 each carry the phosphoserine modification. Phosphothreonine is present on T113. Phosphoserine occurs at positions 115 and 122. Over residues S122–S131 the composition is skewed to low complexity.

Belongs to the FAM219 family.

This chain is Protein FAM219A (FAM219A), found in Homo sapiens (Human).